The following is a 114-amino-acid chain: Ig heavy chain V region (114 aa).

An Ig-like domain is found at 1-106 (EVQLQQSGAE…AVRVISRYFD (106 aa)).

The sequence is that of Ig heavy chain V region from Mus musculus (Mouse).